Here is a 956-residue protein sequence, read N- to C-terminus: Thrombospondin-3 (956 aa).

The first 21 residues, 1 to 21, serve as a signal peptide directing secretion; the sequence is MEKPELWGVLALLLLCSYTCG. Residues 22-193 form the Laminin G-like domain; that stretch reads SQDLQVIDLL…VESMKIILGG (172 aa). 21 disulfides stabilise this stretch: cysteine 278–cysteine 289, cysteine 283–cysteine 300, cysteine 303–cysteine 314, cysteine 320–cysteine 332, cysteine 326–cysteine 341, cysteine 344–cysteine 368, cysteine 374–cysteine 388, cysteine 382–cysteine 397, cysteine 400–cysteine 412, cysteine 418–cysteine 432, cysteine 426–cysteine 442, cysteine 444–cysteine 455, cysteine 471–cysteine 478, cysteine 483–cysteine 503, cysteine 519–cysteine 539, cysteine 542–cysteine 562, cysteine 578–cysteine 598, cysteine 601–cysteine 621, cysteine 639–cysteine 659, cysteine 679–cysteine 699, and cysteine 715–cysteine 936. The N-linked (GlcNAc...) asparagine glycan is linked to asparagine 310. Positions 316–354 constitute an EGF-like 1; calcium-binding domain; it reads DINECAHADPCFPGSSCINTMPGFHCEACPPGYKGTRVS. The EGF-like 2; calcium-binding domain maps to 370–410; sequence DIDECNDGNNGGCDPNSICTNTVGSFKCGPCRLGFLGNQSQ. Residue asparagine 407 is glycosylated (N-linked (GlcNAc...) asparagine). The EGF-like 3 domain maps to 414-456; it reads PARTCHSPAHSPCHIHAHCLFERNGAVSCQCNVGWAGNGNVCG. TSP type-3 repeat units lie at residues 457 to 491, 492 to 527, 528 to 550, 551 to 586, 587 to 609, 610 to 647, 648 to 687, and 688 to 723; these read PDTD…NSGQ, EDAD…NKDQ, QNSD…NNDQ, KDTD…NPLQ, TDRD…NPTQ, TDAD…NSSQ, LDSD…NPNQ, and KDSD…EVTL. Disordered stretches follow at residues 518–537 and 546–699; these read NCRL…SFGD and PNND…GDVC. Residues 555–568 are compositionally biased toward acidic residues; it reads GNGEGDACDNDVDG. A compositionally biased stretch (acidic residues) spans 612–628; sequence ADSDLVGDVCDTNEDSD. N-linked (GlcNAc...) asparagine glycosylation occurs at asparagine 644. The segment covering 650-667 has biased composition (acidic residues); that stretch reads SDNDGLGDECDGDDDNDG. The TSP C-terminal domain occupies 727–941; that stretch reads RAYQTVILDP…LQYRCNDTVP (215 aa). Asparagine 937 carries N-linked (GlcNAc...) asparagine glycosylation.

This sequence belongs to the thrombospondin family. As to quaternary structure, oligomer; disulfide-linked. In terms of tissue distribution, brain, lung and cartilage.

Functionally, adhesive glycoprotein that mediates cell-to-cell and cell-to-matrix interactions. Can bind to fibrinogen, fibronectin, laminin and type V collagen. In Mus musculus (Mouse), this protein is Thrombospondin-3 (Thbs3).